Reading from the N-terminus, the 152-residue chain is Methylglyoxal synthase (152 aa).

In terms of domain architecture, MGS-like spans 6 to 152 (RKISARKSIA…YDGYLAERLA (147 aa)). Substrate contacts are provided by residues His-19, Lys-23, 45-48 (TGTT), and 65-66 (SG). Residue Asp-71 is the Proton donor/acceptor of the active site. His-98 serves as a coordination point for substrate.

This sequence belongs to the methylglyoxal synthase family.

The enzyme catalyses dihydroxyacetone phosphate = methylglyoxal + phosphate. Catalyzes the formation of methylglyoxal from dihydroxyacetone phosphate. The chain is Methylglyoxal synthase from Actinobacillus pleuropneumoniae serotype 3 (strain JL03).